The chain runs to 186 residues: Ribosome rescue factor SmrB (186 aa).

One can recognise a Smr domain in the interval 99–174; that stretch reads IDLHGLTQHQ…SDAAIIVIIE (76 aa).

The protein belongs to the SmrB family. In terms of assembly, associates with collided ribosomes, but not with correctly translating polysomes.

Its function is as follows. Acts as a ribosome collision sensor. Detects stalled/collided disomes (pairs of ribosomes where the leading ribosome is stalled and a second ribosome has collided with it) and endonucleolytically cleaves mRNA at the 5' boundary of the stalled ribosome. Stalled/collided disomes form a new interface (primarily via the 30S subunits) that binds SmrB. Cleaved mRNA becomes available for tmRNA ligation, leading to ribosomal subunit dissociation and rescue of stalled ribosomes. The protein is Ribosome rescue factor SmrB of Buchnera aphidicola subsp. Acyrthosiphon pisum (strain 5A).